The following is a 968-amino-acid chain: RNA polymerase-associated protein RapA (968 aa).

In terms of domain architecture, Helicase ATP-binding spans 164–334 (EVGQRHAPRV…FARLRLLDPD (171 aa)). 177–184 (DEVGLGKT) is an ATP binding site. Positions 280-283 (DEAH) match the DEAH box motif. In terms of domain architecture, Helicase C-terminal spans 490–644 (RVEWLLNYLV…TCPTGRTIYD (155 aa)).

This sequence belongs to the SNF2/RAD54 helicase family. RapA subfamily. Interacts with the RNAP. Has a higher affinity for the core RNAP than for the holoenzyme. Its ATPase activity is stimulated by binding to RNAP.

In terms of biological role, transcription regulator that activates transcription by stimulating RNA polymerase (RNAP) recycling in case of stress conditions such as supercoiled DNA or high salt concentrations. Probably acts by releasing the RNAP, when it is trapped or immobilized on tightly supercoiled DNA. Does not activate transcription on linear DNA. Probably not involved in DNA repair. In Yersinia pseudotuberculosis serotype O:1b (strain IP 31758), this protein is RNA polymerase-associated protein RapA.